A 522-amino-acid chain; its full sequence is Semenogelin-2 (522 aa).

An N-terminal signal peptide occupies residues 1 to 23 (MKSIILFVLSLLLILEKQAAVMG). Disordered stretches follow at residues 26-62 (CGSK…SKGS), 132-158 (GGQA…ISSQ), 272-358 (NLNQ…ERHL), and 379-522 (EEQI…PVST). Polar residues-rich tracts occupy residues 31-40 (QLPSGSSQFP) and 137-158 (RGTQ…ISSQ). Residues 292 to 310 (RTEERQLNRGEKSVQKDVS) show a composition bias toward basic and acidic residues. A compositionally biased stretch (polar residues) spans 325-335 (KSQNQVTIHSQ). Basic and acidic residues predominate over residues 336–345 (GQEHGHKENK). Polar residues-rich tracts occupy residues 379-397 (EEQI…SQAQ), 427-436 (KDVSQSSTSF), and 446-464 (SQIQ…QNAK). 2 stretches are compositionally biased toward basic and acidic residues: residues 465–492 (GKSD…ESSE) and 499–522 (TEHE…PVST).

This sequence belongs to the semenogelin family. In terms of assembly, interacts with SERPINA5.

It is found in the secreted. Functionally, participates in the formation of a gel matrix (sperm coagulum) entrapping the accessory gland secretions and ejaculated spermatozoa. In Hylobates klossii (Kloss's gibbon), this protein is Semenogelin-2 (SEMG2).